The chain runs to 429 residues: Ribosomal RNA small subunit methyltransferase B (429 aa).

Residues Cys254–Lys260, Asp277, Asp303, and Asp322 each bind S-adenosyl-L-methionine. Residue Cys375 is the Nucleophile of the active site. Positions Ala397–Asp419 are disordered. The span at Glu400–Leu412 shows a compositional bias: polar residues.

The protein belongs to the class I-like SAM-binding methyltransferase superfamily. RsmB/NOP family.

The protein resides in the cytoplasm. It catalyses the reaction cytidine(967) in 16S rRNA + S-adenosyl-L-methionine = 5-methylcytidine(967) in 16S rRNA + S-adenosyl-L-homocysteine + H(+). Its function is as follows. Specifically methylates the cytosine at position 967 (m5C967) of 16S rRNA. The sequence is that of Ribosomal RNA small subunit methyltransferase B from Salmonella newport (strain SL254).